A 357-amino-acid chain; its full sequence is G-protein coupled receptor 183 (357 aa).

Residues 1-27 (MANNFTTPLATSHGNNCDLYAHHSTAR) are Extracellular-facing. A glycan (N-linked (GlcNAc...) asparagine) is linked at asparagine 4. Residues 28–53 (VLMPLHYSLVFIIGLVGNLLALVVIV) form a helical membrane-spanning segment. The Cytoplasmic segment spans residues 54–73 (QNRKKINSTTLYSMNLVISD). Residues 74–91 (ILFTTALPTRIAYYALGF) form a helical membrane-spanning segment. Position 83 (arginine 83) interacts with 7alpha,25-dihydroxycholesterol. Topologically, residues 92 to 101 (DWRIGDALCR) are extracellular. Residues cysteine 100 and cysteine 177 are joined by a disulfide bond. Residues 102–123 (VTALVFYINTYAGVNFMTCLSI) traverse the membrane as a helical segment. 7alpha,25-dihydroxycholesterol contacts are provided by tyrosine 108 and tyrosine 112. The interval 122–130 (SIDRFFAVV) is interaction with G proteins. Residues 124 to 145 (DRFFAVVHPLRYNKIKRIEYAK) are Cytoplasmic-facing. A helical membrane pass occupies residues 146–164 (GVCLSVWILVFAQTLPLLL). The Extracellular segment spans residues 165–188 (TPMSKEEGDKTTCMEYPNFEGTAS). Residues 189-211 (LPWILLGACLLGYVLPITVILLC) form a helical membrane-spanning segment. At 212–237 (YSQICCKLFRTAKQNPLTEKSGVNKK) the chain is on the cytoplasmic side. A helical membrane pass occupies residues 238–261 (ALNTIILIIVVFILCFTPYHVAII). Tyrosine 256 lines the 7alpha,25-dihydroxycholesterol pocket. The Extracellular portion of the chain corresponds to 262–283 (QHMIKMLCSPGALECGARHSFQ). The helical transmembrane segment at 284-308 (ISLHFTVCLMNFNCCMDPFIYFFAC) threads the bilayer. The Cytoplasmic segment spans residues 309–357 (KGYKRKVMKMLKRQVSVSISSAVRSAPEENSREMTESQMMIHSKASNGR). Residues serine 324 and serine 345 each carry the phosphoserine modification. Residues 336-357 (EENSREMTESQMMIHSKASNGR) are disordered. The segment covering 344 to 357 (ESQMMIHSKASNGR) has biased composition (polar residues).

Belongs to the G-protein coupled receptor 1 family. In terms of assembly, homodimer and heterodimer. Heterodimerizes with CXCR5; leading to modulate the interaction between of CXCL13 and CXCR5. Expressed in mature B-cells and increases in expression early after activation, before being down-regulated in germinal center B-cells. Expressed in astrocytes. Specifically expressed in CD4(+) dendritic cells but not in CD8(+) dendritic cells. Expressed in monocyte/osteoclasts precursors and mature osteoclasts.

It is found in the cell membrane. In terms of biological role, G-protein coupled receptor expressed in lymphocytes that acts as a chemotactic receptor for B-cells, T-cells, splenic dendritic cells, monocytes/macrophages and astrocytes. Receptor for oxysterol 7-alpha,25-dihydroxycholesterol (7-alpha,25-OHC) and other related oxysterols. Mediates cell positioning and movement of a number of cells by binding the 7-alpha,25-OHC ligand that forms a chemotactic gradient. Binding of 7-alpha,25-OHC mediates the correct localization of B-cells during humoral immune responses. Collaborates with CXCR5 to mediate B-cell migration; probably by forming a heterodimer with CXCR5 that affects the interaction between of CXCL13 and CXCR5. Guides B-cell movement along the B-cell zone-T-cell zone boundary and later to interfollicular and outer follicular regions. Its specific expression during B-cell maturation helps position B-cells appropriately for mounting T-dependent antibody responses. Also acts as a chemotactic receptor for some T-cells upon binding to 7-alpha,25-OHC ligand. Promotes follicular helper T (Tfh) cells differentiation by positioning activated T-cells at the follicle-T-zone interface, promoting contact of newly activated CD4 T-cells with activated dendritic cells and exposing them to Tfh-cell-promoting inducible costimulator (ICOS) ligand. Expression in splenic dendritic cells is required for their homeostasis, localization and ability to induce B- and T-cell responses: GPR183 acts as a chemotactic receptor in dendritic cells that mediates the accumulation of CD4(+) dendritic cells in bridging channels. Regulates migration of astrocytes and is involved in communication between astrocytes and macrophages. Promotes osteoclast precursor migration to bone surfaces. Signals constitutively through G(i)-alpha, but not G(s)-alpha or G(q)-alpha. Signals constitutively also via MAPK1/3 (ERK1/2). This Mus musculus (Mouse) protein is G-protein coupled receptor 183.